The primary structure comprises 251 residues: 5-oxoprolinase subunit A (251 aa).

It belongs to the LamB/PxpA family. In terms of assembly, forms a complex composed of PxpA, PxpB and PxpC.

The enzyme catalyses 5-oxo-L-proline + ATP + 2 H2O = L-glutamate + ADP + phosphate + H(+). Its function is as follows. Catalyzes the cleavage of 5-oxoproline to form L-glutamate coupled to the hydrolysis of ATP to ADP and inorganic phosphate. This is 5-oxoprolinase subunit A from Tolumonas auensis (strain DSM 9187 / NBRC 110442 / TA 4).